Reading from the N-terminus, the 343-residue chain is Ion-translocating oxidoreductase complex subunit D (343 aa).

The next 4 helical transmembrane spans lie at 24-44 (VLLA…AGTL), 45-65 (YNLA…LAAR), 69-91 (LAFF…ALPP), and 124-144 (AMLG…SWPA). Threonine 171 is modified (FMN phosphoryl threonine). The next 5 membrane-spanning stretches (helical) occupy residues 197–217 (FGGA…LYLL), 221–241 (LITW…SLLF), 251–271 (GSPL…FIVT), 284–304 (LVFG…GGYP), and 305–325 (DAVA…DYYT).

This sequence belongs to the NqrB/RnfD family. The complex is composed of six subunits: RnfA, RnfB, RnfC, RnfD, RnfE and RnfG. The cofactor is FMN.

It is found in the cell inner membrane. Its function is as follows. Part of a membrane-bound complex that couples electron transfer with translocation of ions across the membrane. In Ectopseudomonas mendocina (strain ymp) (Pseudomonas mendocina), this protein is Ion-translocating oxidoreductase complex subunit D.